Here is a 573-residue protein sequence, read N- to C-terminus: Trehalose synthase (573 aa).

Asp70 lines the substrate pocket. Position 112 (Asn112) interacts with Ca(2+). Substrate contacts are provided by His113 and Gln178. Asp180 is a binding site for Ca(2+). A substrate-binding site is contributed by Arg208. Asp210 acts as the Nucleophile in catalysis. The Ca(2+) site is built by Tyr214, Leu215, and Glu217. Glu252 (proton donor) is an active-site residue. Positions 326 and 327 each coordinate substrate.

This sequence belongs to the glycosyl hydrolase 13 family. TreS subfamily.

The enzyme catalyses D-maltose = alpha,alpha-trehalose. In terms of biological role, catalyzes the reversible interconversion of maltose and alpha,alpha-trehalose by transglucosylation. This Pimelobacter sp. (strain R48) protein is Trehalose synthase (treS).